Consider the following 178-residue polypeptide: tRNA (cytidine(56)-2'-O)-methyltransferase (178 aa).

S-adenosyl-L-methionine contacts are provided by residues Leu84, 112 to 116, and 130 to 137; these read GAEKV and VGNQPHSE.

It belongs to the aTrm56 family. As to quaternary structure, homodimer.

It localises to the cytoplasm. The enzyme catalyses cytidine(56) in tRNA + S-adenosyl-L-methionine = 2'-O-methylcytidine(56) in tRNA + S-adenosyl-L-homocysteine + H(+). Specifically catalyzes the AdoMet-dependent 2'-O-ribose methylation of cytidine at position 56 in tRNAs. In Methanocella arvoryzae (strain DSM 22066 / NBRC 105507 / MRE50), this protein is tRNA (cytidine(56)-2'-O)-methyltransferase.